Reading from the N-terminus, the 380-residue chain is Probable G-protein coupled receptor 132 (380 aa).

Over 1 to 45 (MCPMLLKNGYNGNATPVTTTAPWASLGLSAKTCNNVSFEESRIVL) the chain is Extracellular. N-linked (GlcNAc...) asparagine glycosylation occurs at N35. The helical transmembrane segment at 46–68 (VVVYSAVCTLGVPANCLTAWLAL) threads the bilayer. The Cytoplasmic portion of the chain corresponds to 69-79 (LQVLQGNVLAV). A helical transmembrane segment spans residues 80–102 (YLLCLALCELLYTGTLPLWVIYI). At 103–116 (RNQHRWTLGLLACK) the chain is on the extracellular side. The cysteines at positions 115 and 186 are disulfide-linked. A helical membrane pass occupies residues 117–138 (VTAYIFFCNIYVSILFLCCISC). Topologically, residues 139-158 (DRFVAVVYALESRGRRRRRT) are cytoplasmic. Residues 159 to 178 (AILISACIFILVGIVHYPVF) form a helical membrane-spanning segment. The Extracellular portion of the chain corresponds to 179 to 197 (QTEDKETCFDMLQMDSRIA). A helical membrane pass occupies residues 198–220 (GYYYARFTVGFAIPLSIIAFTNH). The Cytoplasmic portion of the chain corresponds to 221-246 (RIFRSIKQSMGLSAAQKAKVKHSAIA). The chain crosses the membrane as a helical span at residues 247–269 (VVVIFLVCFAPYHLVLLVKAAAF). Over 270-288 (SYYRGDRNAMCGLEERLYT) the chain is Extracellular. The chain crosses the membrane as a helical span at residues 289-311 (ASVVFLCLSTVNGVADPIIYVLA). The Cytoplasmic segment spans residues 312–380 (TDHSRQEVSR…PAKRLIEESC (69 aa)).

It belongs to the G-protein coupled receptor 1 family. As to expression, highly expressed in macrophages and hematopoietic tissues rich in lymphocytes, like spleen and thymus. Weakly expressed in heart and lung. In atherosclerotic plaques, expression is observed around the lipid core and at the shoulder region.

The protein resides in the cell membrane. Functionally, may be a receptor for oxidized free fatty acids derived from linoleic and arachidonic acids such as 9-hydroxyoctadecadienoic acid (9-HODE). Activates a G alpha protein, most likely G alpha(q). May be involved in apoptosis. Functions at the G2/M checkpoint to delay mitosis. May function as a sensor that monitors the oxidative states and mediates appropriate cellular responses such as secretion of paracrine signals and attenuation of proliferation. May mediate ths accumulation of intracellular inositol phosphates at acidic pH through proton-sensing activity. This chain is Probable G-protein coupled receptor 132 (GPR132), found in Homo sapiens (Human).